The primary structure comprises 247 residues: Adenosylcobinamide-GDP ribazoletransferase (247 aa).

The next 6 helical transmembrane spans lie at 31-51 (ILFY…VTCI), 55-75 (LPAL…TGGL), 109-129 (IGVL…YVLI), 135-155 (LFLI…FLTT), 183-203 (VLLL…GFLI), and 227-247 (AIEI…FYLV).

This sequence belongs to the CobS family. Mg(2+) is required as a cofactor.

The protein localises to the cell inner membrane. It catalyses the reaction alpha-ribazole + adenosylcob(III)inamide-GDP = adenosylcob(III)alamin + GMP + H(+). It carries out the reaction alpha-ribazole 5'-phosphate + adenosylcob(III)inamide-GDP = adenosylcob(III)alamin 5'-phosphate + GMP + H(+). The protein operates within cofactor biosynthesis; adenosylcobalamin biosynthesis; adenosylcobalamin from cob(II)yrinate a,c-diamide: step 7/7. Joins adenosylcobinamide-GDP and alpha-ribazole to generate adenosylcobalamin (Ado-cobalamin). Also synthesizes adenosylcobalamin 5'-phosphate from adenosylcobinamide-GDP and alpha-ribazole 5'-phosphate. This is Adenosylcobinamide-GDP ribazoletransferase from Acinetobacter baumannii (strain ATCC 17978 / DSM 105126 / CIP 53.77 / LMG 1025 / NCDC KC755 / 5377).